A 63-amino-acid chain; its full sequence is Conotoxin Pu5.4 (63 aa).

The N-terminal stretch at M1–A22 is a signal peptide. The propeptide occupies T23–R50. The residue at position 62 (W62) is a Tryptophan amide.

Belongs to the conotoxin T superfamily. Post-translationally, contains 2 disulfide bonds that can be either 'C1-C3, C2-C4' or 'C1-C4, C2-C3', since these disulfide connectivities have been observed for conotoxins with cysteine framework V (for examples, see AC P0DQQ7 and AC P81755). As to expression, expressed by the venom duct.

Its subcellular location is the secreted. The protein is Conotoxin Pu5.4 of Conus pulicarius (Flea-bitten cone).